A 229-amino-acid polypeptide reads, in one-letter code: Deleted in azoospermia-like (229 aa).

Residues 47–128 (NTLFVGGIDM…PAIMKERSSR (82 aa)) form the RRM domain. Positions 172–198 (PYSYSSPPGIMVPQVPMNYAQTTYAYQ) constitute a DAZ domain.

This sequence belongs to the RRM DAZ family. Testis and ovary specific. In ovary, it is localized in the cortex of oocytes. At the onset of embryogenesis, maternal product is located at the vegetal pole, before migrating toward blastomeres through cytoplasmic streams as early embryogenesis proceededs.

The protein resides in the cytoplasm. In terms of biological role, RNA-binding protein involved in gametogenesis in both males and females. Acts by binding to the 3'-UTR of mRNA, specifically recognizing GUU triplets, and promoting the translation of key transcripts. Establishes oocyte polarity through interaction with Bucky ball (BUC). Interacts with Bucky ball (BUC) mRNA to mediate Balbiani body formation and oocyte polarity during early oogenesis. In Danio rerio (Zebrafish), this protein is Deleted in azoospermia-like (dazl).